Reading from the N-terminus, the 153-residue chain is D-aminoacyl-tRNA deacylase (153 aa).

Residues 137–138 (GP) carry the Gly-cisPro motif, important for rejection of L-amino acids motif.

It belongs to the DTD family. In terms of assembly, homodimer.

It is found in the cytoplasm. The catalysed reaction is glycyl-tRNA(Ala) + H2O = tRNA(Ala) + glycine + H(+). The enzyme catalyses a D-aminoacyl-tRNA + H2O = a tRNA + a D-alpha-amino acid + H(+). Its function is as follows. An aminoacyl-tRNA editing enzyme that deacylates mischarged D-aminoacyl-tRNAs. Also deacylates mischarged glycyl-tRNA(Ala), protecting cells against glycine mischarging by AlaRS. Acts via tRNA-based rather than protein-based catalysis; rejects L-amino acids rather than detecting D-amino acids in the active site. By recycling D-aminoacyl-tRNA to D-amino acids and free tRNA molecules, this enzyme counteracts the toxicity associated with the formation of D-aminoacyl-tRNA entities in vivo and helps enforce protein L-homochirality. The polypeptide is D-aminoacyl-tRNA deacylase (Dehalococcoides mccartyi (strain ATCC BAA-2100 / JCM 16839 / KCTC 5957 / BAV1)).